Reading from the N-terminus, the 235-residue chain is Sugar fermentation stimulation protein homolog (235 aa).

This sequence belongs to the SfsA family.

The sequence is that of Sugar fermentation stimulation protein homolog from Pseudomonas paraeruginosa (strain DSM 24068 / PA7) (Pseudomonas aeruginosa (strain PA7)).